We begin with the raw amino-acid sequence, 462 residues long: Argininosuccinate lyase (462 aa).

It belongs to the lyase 1 family. Argininosuccinate lyase subfamily.

It localises to the cytoplasm. It carries out the reaction 2-(N(omega)-L-arginino)succinate = fumarate + L-arginine. It participates in amino-acid biosynthesis; L-arginine biosynthesis; L-arginine from L-ornithine and carbamoyl phosphate: step 3/3. This Bacillus anthracis (strain A0248) protein is Argininosuccinate lyase.